We begin with the raw amino-acid sequence, 487 residues long: Signal recognition particle subunit SRP54 (487 aa).

The interval Met1–Leu295 is G-domain. GTP contacts are provided by residues Gly108–Thr115, Asp190–Arg194, and Thr248–Asp251. An M-domain region spans residues Gly296–Lys487.

It belongs to the GTP-binding SRP family. SRP54 subfamily. In terms of assembly, component of a signal recognition particle (SRP) complex that consists of a 7SL RNA molecule of 300 nucleotides and six protein subunits: SRP72, SRP68, SRP54, SRP19, SRP14 and SRP9.

The protein localises to the cytoplasm. The protein resides in the endoplasmic reticulum. It carries out the reaction GTP + H2O = GDP + phosphate + H(+). Component of the signal recognition particle (SRP) complex, a ribonucleoprotein complex that mediates the cotranslational targeting of secretory and membrane proteins to the endoplasmic reticulum (ER). As part of the SRP complex, associates with the SRP receptor (SR) component SRPRA to target secretory proteins to the endoplasmic reticulum membrane. Binds to the signal sequence of presecretory proteins when they emerge from the ribosomes. Displays basal GTPase activity, and stimulates reciprocal GTPase activation of the SR subunit SRPRA. Forms a guanosine 5'-triphosphate (GTP)-dependent complex with the SR subunit SRPRA. SR compaction and GTPase mediated rearrangement of SR drive SRP-mediated cotranslational protein translocation into the ER. Requires the presence of SRP9/SRP14 and/or SRP19 to stably interact with RNA. This Entamoeba histolytica (strain ATCC 30459 / HM-1:IMSS / ABRM) protein is Signal recognition particle subunit SRP54.